A 79-amino-acid polypeptide reads, in one-letter code: Ferredoxin (79 aa).

4Fe-4S ferredoxin-type domains lie at 2–30 and 31–60; these read PHVI…YDGG and DQFY…PEED. Residues C9 and C17 each contribute to the [3Fe-4S] cluster site. [4Fe-4S] cluster contacts are provided by C21, C40, C43, and C46. C50 provides a ligand contact to [3Fe-4S] cluster.

The cofactor is [4Fe-4S] cluster. It depends on [3Fe-4S] cluster as a cofactor.

Ferredoxins are iron-sulfur proteins that transfer electrons in a wide variety of metabolic reactions. The sequence is that of Ferredoxin from Thermus thermophilus (strain ATCC 27634 / DSM 579 / HB8).